The sequence spans 367 residues: Glutamate 5-kinase (367 aa).

Lys-10 is a binding site for ATP. Substrate-binding residues include Ser-50, Asp-137, and Asn-149. ATP is bound by residues 169 to 170 and 211 to 217; these read TD and TGGMGTK. Residues 275 to 353 form the PUA domain; it reads AGEITVDEGA…QQIDAILGYE (79 aa).

It belongs to the glutamate 5-kinase family.

The protein localises to the cytoplasm. The catalysed reaction is L-glutamate + ATP = L-glutamyl 5-phosphate + ADP. Its pathway is amino-acid biosynthesis; L-proline biosynthesis; L-glutamate 5-semialdehyde from L-glutamate: step 1/2. Functionally, catalyzes the transfer of a phosphate group to glutamate to form L-glutamate 5-phosphate. The chain is Glutamate 5-kinase from Enterobacter sp. (strain 638).